The chain runs to 585 residues: Arginine--tRNA ligase (585 aa).

The 'HIGH' region signature appears at 126-136 (PNIAKEMHVGH).

It belongs to the class-I aminoacyl-tRNA synthetase family. In terms of assembly, monomer.

The protein localises to the cytoplasm. It carries out the reaction tRNA(Arg) + L-arginine + ATP = L-arginyl-tRNA(Arg) + AMP + diphosphate. The chain is Arginine--tRNA ligase from Picosynechococcus sp. (strain ATCC 27264 / PCC 7002 / PR-6) (Agmenellum quadruplicatum).